Reading from the N-terminus, the 156-residue chain is SsrA-binding protein (156 aa).

The interval 130–156 (KFDKRDDLKKKDAKRDIDRALRDKQKY) is disordered. Over residues 132–156 (DKRDDLKKKDAKRDIDRALRDKQKY) the composition is skewed to basic and acidic residues.

The protein belongs to the SmpB family.

It is found in the cytoplasm. Its function is as follows. Required for rescue of stalled ribosomes mediated by trans-translation. Binds to transfer-messenger RNA (tmRNA), required for stable association of tmRNA with ribosomes. tmRNA and SmpB together mimic tRNA shape, replacing the anticodon stem-loop with SmpB. tmRNA is encoded by the ssrA gene; the 2 termini fold to resemble tRNA(Ala) and it encodes a 'tag peptide', a short internal open reading frame. During trans-translation Ala-aminoacylated tmRNA acts like a tRNA, entering the A-site of stalled ribosomes, displacing the stalled mRNA. The ribosome then switches to translate the ORF on the tmRNA; the nascent peptide is terminated with the 'tag peptide' encoded by the tmRNA and targeted for degradation. The ribosome is freed to recommence translation, which seems to be the essential function of trans-translation. The protein is SsrA-binding protein of Exiguobacterium sibiricum (strain DSM 17290 / CCUG 55495 / CIP 109462 / JCM 13490 / 255-15).